Reading from the N-terminus, the 288-residue chain is Transposase for insertion sequence element IS1106 (288 aa).

Belongs to the transposase 11 family.

In terms of biological role, involved in the transposition of the insertion sequence. This Neisseria meningitidis serogroup B protein is Transposase for insertion sequence element IS1106.